The chain runs to 503 residues: Glutamate--tRNA ligase (503 aa).

The 'HIGH' region signature appears at 12-22 (PSPTGYLHVGG). A 'KMSKS' region motif is present at residues 259–263 (KLSKR). Residue lysine 262 coordinates ATP.

It belongs to the class-I aminoacyl-tRNA synthetase family. Glutamate--tRNA ligase type 1 subfamily. Monomer.

It localises to the cytoplasm. The enzyme catalyses tRNA(Glu) + L-glutamate + ATP = L-glutamyl-tRNA(Glu) + AMP + diphosphate. Catalyzes the attachment of glutamate to tRNA(Glu) in a two-step reaction: glutamate is first activated by ATP to form Glu-AMP and then transferred to the acceptor end of tRNA(Glu). The polypeptide is Glutamate--tRNA ligase (Chlorobaculum parvum (strain DSM 263 / NCIMB 8327) (Chlorobium vibrioforme subsp. thiosulfatophilum)).